A 225-amino-acid chain; its full sequence is NAD(P)H-quinone oxidoreductase subunit K, chloroplastic (225 aa).

The [4Fe-4S] cluster site is built by Cys-43, Cys-44, Cys-108, and Cys-139.

This sequence belongs to the complex I 20 kDa subunit family. NDH is composed of at least 16 different subunits, 5 of which are encoded in the nucleus. [4Fe-4S] cluster is required as a cofactor.

It is found in the plastid. It localises to the chloroplast thylakoid membrane. The catalysed reaction is a plastoquinone + NADH + (n+1) H(+)(in) = a plastoquinol + NAD(+) + n H(+)(out). The enzyme catalyses a plastoquinone + NADPH + (n+1) H(+)(in) = a plastoquinol + NADP(+) + n H(+)(out). Its function is as follows. NDH shuttles electrons from NAD(P)H:plastoquinone, via FMN and iron-sulfur (Fe-S) centers, to quinones in the photosynthetic chain and possibly in a chloroplast respiratory chain. The immediate electron acceptor for the enzyme in this species is believed to be plastoquinone. Couples the redox reaction to proton translocation, and thus conserves the redox energy in a proton gradient. The sequence is that of NAD(P)H-quinone oxidoreductase subunit K, chloroplastic from Lolium perenne (Perennial ryegrass).